The primary structure comprises 140 residues: Putative nickel-responsive regulator 2 (140 aa).

Ni(2+) is bound by residues His-81, His-92, His-94, and Cys-100.

This sequence belongs to the transcriptional regulatory CopG/NikR family. Requires Ni(2+) as cofactor.

In terms of biological role, transcriptional regulator. In Methanosarcina acetivorans (strain ATCC 35395 / DSM 2834 / JCM 12185 / C2A), this protein is Putative nickel-responsive regulator 2.